Reading from the N-terminus, the 317-residue chain is DNA-directed RNA polymerase subunit alpha 2 (317 aa).

The segment at 1 to 227 (MALENLLHPT…NQLRNIVDIE (227 aa)) is alpha N-terminal domain (alpha-NTD). The segment at 241–317 (INPILLKHVE…TLIENWPQDL (77 aa)) is alpha C-terminal domain (alpha-CTD).

It belongs to the RNA polymerase alpha chain family. As to quaternary structure, homodimer. The RNAP catalytic core consists of 2 alpha, 1 beta, 1 beta' and 1 omega subunit. When a sigma factor is associated with the core the holoenzyme is formed, which can initiate transcription.

The enzyme catalyses RNA(n) + a ribonucleoside 5'-triphosphate = RNA(n+1) + diphosphate. Its function is as follows. DNA-dependent RNA polymerase catalyzes the transcription of DNA into RNA using the four ribonucleoside triphosphates as substrates. The sequence is that of DNA-directed RNA polymerase subunit alpha 2 from Francisella tularensis subsp. holarctica (strain LVS).